A 368-amino-acid chain; its full sequence is Cytochrome P450 119 (368 aa).

Heme contacts are provided by H76, R80, T257, R259, H315, and C317.

It belongs to the cytochrome P450 family. Requires heme as cofactor.

The protein localises to the cytoplasm. It catalyses the reaction 2 a phenolic donor + H2O2 = 2 a phenolic radical donor + 2 H2O. Functionally, the endogenous substrate is not known. In vitro, catalyzes the H(2)O(2)-dependent epoxidation of styrene, cis-beta-methylstyrene, and cis-stilbene with retention of stereochemistry. Is able to use cumene hydroperoxide (CHP) or tert-butyl hydroperoxide (TBHP) instead of H(2)O(2) as the electron acceptor. Can also hydroxylate fatty acids such as lauric acid. The chain is Cytochrome P450 119 (cyp119) from Sulfolobus acidocaldarius (strain ATCC 33909 / DSM 639 / JCM 8929 / NBRC 15157 / NCIMB 11770).